Reading from the N-terminus, the 113-residue chain is Class I hydrophobin POH1 (113 aa).

The signal sequence occupies residues 1–26 (MFSIRISTVVLAASALLAVAIPMTNT). Cystine bridges form between C31/C93, C38/C87, C39/C74, and C94/C107.

The protein belongs to the fungal hydrophobin family. As to quaternary structure, self-assembles to form functional amyloid fibrils called rodlets. Self-assembly into fibrillar rodlets occurs spontaneously at hydrophobic:hydrophilic interfaces and the rodlets further associate laterally to form amphipathic monolayers. As to expression, expressed in the fruiting bodies but not in vegetative mycelium.

It is found in the secreted. Its subcellular location is the cell wall. Aerial growth, conidiation, and dispersal of filamentous fungi in the environment rely upon a capability of their secreting small amphipathic proteins called hydrophobins (HPBs) with low sequence identity. Class I can self-assemble into an outermost layer of rodlet bundles on aerial cell surfaces, conferring cellular hydrophobicity that supports fungal growth, development and dispersal; whereas Class II form highly ordered films at water-air interfaces through intermolecular interactions but contribute nothing to the rodlet structure. POH1 is a class I hydrophobin that is involved in the formation of mycelium knots and subsequent fruiting bodies. This Pleurotus ostreatus (Oyster mushroom) protein is Class I hydrophobin POH1.